The primary structure comprises 130 residues: Small ribosomal subunit protein uS8 (130 aa).

This sequence belongs to the universal ribosomal protein uS8 family. In terms of assembly, part of the 30S ribosomal subunit. Contacts proteins S5 and S12.

In terms of biological role, one of the primary rRNA binding proteins, it binds directly to 16S rRNA central domain where it helps coordinate assembly of the platform of the 30S subunit. This Ruegeria sp. (strain TM1040) (Silicibacter sp.) protein is Small ribosomal subunit protein uS8.